The chain runs to 544 residues: Chaperonin GroEL (544 aa).

ATP-binding positions include 30–33 (TLGP), Lys-51, 87–91 (DGTTT), Gly-415, and Asp-495.

The protein belongs to the chaperonin (HSP60) family. Forms a cylinder of 14 subunits composed of two heptameric rings stacked back-to-back. Interacts with the co-chaperonin GroES.

The protein localises to the cytoplasm. The enzyme catalyses ATP + H2O + a folded polypeptide = ADP + phosphate + an unfolded polypeptide.. Functionally, together with its co-chaperonin GroES, plays an essential role in assisting protein folding. The GroEL-GroES system forms a nano-cage that allows encapsulation of the non-native substrate proteins and provides a physical environment optimized to promote and accelerate protein folding. The sequence is that of Chaperonin GroEL from Aeromonas salmonicida (strain A449).